The sequence spans 106 residues: Large ribosomal subunit protein uL24 (106 aa).

Belongs to the universal ribosomal protein uL24 family. Part of the 50S ribosomal subunit.

Its function is as follows. One of two assembly initiator proteins, it binds directly to the 5'-end of the 23S rRNA, where it nucleates assembly of the 50S subunit. One of the proteins that surrounds the polypeptide exit tunnel on the outside of the subunit. This chain is Large ribosomal subunit protein uL24, found in Bordetella petrii (strain ATCC BAA-461 / DSM 12804 / CCUG 43448).